Here is a 101-residue protein sequence, read N- to C-terminus: ATP-dependent Clp protease adapter protein ClpS (101 aa).

Residues 1 to 24 form a disordered region; the sequence is MVVASAPAKPGSVGQQESASRDAT. Residues 13–23 are compositionally biased toward polar residues; sequence VGQQESASRDA.

Belongs to the ClpS family. As to quaternary structure, binds to the N-terminal domain of the chaperone ClpA.

Involved in the modulation of the specificity of the ClpAP-mediated ATP-dependent protein degradation. The protein is ATP-dependent Clp protease adapter protein ClpS of Mycobacterium marinum (strain ATCC BAA-535 / M).